We begin with the raw amino-acid sequence, 1299 residues long: Cilia- and flagella-associated protein 251 (1299 aa).

Residues 1–351 (MSDTEENPLE…SQKPEDILAQ (351 aa)) form a disordered region. 3 stretches are compositionally biased toward acidic residues: residues 17–45 (EMEE…EEEE), 91–162 (EKEE…EEDA), and 176–189 (ESQE…EWVE). Residues 190 to 199 (KEEQREGEEV) show a composition bias toward basic and acidic residues. The segment covering 212-228 (EEEGWEEEKSGEEEKSE) has biased composition (acidic residues). The span at 229-257 (ESERSKERGGEEEGQEKEEAEHEGEREEG) shows a compositional bias: basic and acidic residues. The span at 269-280 (REEEEEEEDTET) shows a compositional bias: acidic residues. 2 stretches are compositionally biased toward basic and acidic residues: residues 281–297 (TETK…EKQN) and 331–351 (NSMK…ILAQ). WD repeat units follow at residues 484 to 526 (PVHT…IWKW), 534 to 574 (ACTL…CWFE), 585 to 624 (VLTE…VWDI), 643 to 678 (PRKL…FYDH), 681 to 741 (SVVN…VYHM), 745 to 785 (GTKL…VWDF), 791 to 828 (LFSR…ILDA), 838 to 874 (PFKY…MVVV), 881 to 924 (WEYL…EYNL), 935 to 975 (LDVH…LFNA), 981 to 1027 (RKTL…ILPV), 1033 to 1071 (KTCA…QWKI), 1109 to 1149 (YFYY…FYPS), and 1169 to 1209 (GKLI…GYTN).

The protein resides in the cytoplasm. The protein localises to the cytoskeleton. Its subcellular location is the cilium axoneme. It localises to the cell projection. It is found in the cilium. The protein resides in the flagellum. In terms of biological role, involved in spermatozoa motility. May also regulate cilium motility through its role in the assembly of the axonemal radial spokes. The chain is Cilia- and flagella-associated protein 251 from Mus musculus (Mouse).